The following is a 243-amino-acid chain: tRNA1(Val) (adenine(37)-N6)-methyltransferase (243 aa).

The protein belongs to the methyltransferase superfamily. tRNA (adenine-N(6)-)-methyltransferase family.

The protein localises to the cytoplasm. The catalysed reaction is adenosine(37) in tRNA1(Val) + S-adenosyl-L-methionine = N(6)-methyladenosine(37) in tRNA1(Val) + S-adenosyl-L-homocysteine + H(+). Functionally, specifically methylates the adenine in position 37 of tRNA(1)(Val) (anticodon cmo5UAC). The protein is tRNA1(Val) (adenine(37)-N6)-methyltransferase of Shewanella loihica (strain ATCC BAA-1088 / PV-4).